Here is a 510-residue protein sequence, read N- to C-terminus: NAD(P)H-quinone oxidoreductase subunit 2 B, chloroplastic (510 aa).

Helical transmembrane passes span 24-44 (LLLF…GLIL), 57-77 (IPWF…ALLF), 99-119 (IFQF…VEYI), 124-144 (MAIT…MFLC), 149-169 (LITI…LSGY), 183-203 (YLLM…WLYG), 227-247 (PGIL…LSLA), 295-315 (WHLL…LIAI), 323-343 (MLAY…IVGD), 354-374 (YMLF…LFGL), 395-415 (ALSL…AGFF), 428-448 (GLYF…YYYL), and 484-504 (MIVC…IIAI).

It belongs to the complex I subunit 2 family. In terms of assembly, NDH is composed of at least 16 different subunits, 5 of which are encoded in the nucleus.

The protein resides in the plastid. Its subcellular location is the chloroplast thylakoid membrane. It catalyses the reaction a plastoquinone + NADH + (n+1) H(+)(in) = a plastoquinol + NAD(+) + n H(+)(out). It carries out the reaction a plastoquinone + NADPH + (n+1) H(+)(in) = a plastoquinol + NADP(+) + n H(+)(out). Its function is as follows. NDH shuttles electrons from NAD(P)H:plastoquinone, via FMN and iron-sulfur (Fe-S) centers, to quinones in the photosynthetic chain and possibly in a chloroplast respiratory chain. The immediate electron acceptor for the enzyme in this species is believed to be plastoquinone. Couples the redox reaction to proton translocation, and thus conserves the redox energy in a proton gradient. The sequence is that of NAD(P)H-quinone oxidoreductase subunit 2 B, chloroplastic from Eucalyptus globulus subsp. globulus (Tasmanian blue gum).